The primary structure comprises 134 residues: MGSLNVSIVTPDGPVYEGVAQMVIARTKAGELGILPGHVPLVAPLKIDIVRLKVESGEEWVAVNGGFMEVNGEEVNILADTAEREQDIDIDRAEKAKQRAEEELSRAKEQKVDEVLAQLALQRAINRIHAKEHN.

The protein belongs to the ATPase epsilon chain family. F-type ATPases have 2 components, CF(1) - the catalytic core - and CF(0) - the membrane proton channel. CF(1) has five subunits: alpha(3), beta(3), gamma(1), delta(1), epsilon(1). CF(0) has three main subunits: a, b and c.

Its subcellular location is the cell membrane. Its function is as follows. Produces ATP from ADP in the presence of a proton gradient across the membrane. The sequence is that of ATP synthase epsilon chain from Listeria monocytogenes serotype 4a (strain HCC23).